The primary structure comprises 652 residues: Acetyl-coenzyme A synthetase (652 aa).

Residues 191 to 194 (RAGR), threonine 311, and asparagine 335 contribute to the CoA site. Residues 387–389 (GEP), 411–416 (DTWWQT), aspartate 500, and arginine 515 each bind ATP. A CoA-binding site is contributed by serine 523. Residue arginine 526 coordinates ATP. Valine 537, histidine 539, and isoleucine 542 together coordinate Mg(2+). A CoA-binding site is contributed by arginine 584. Position 609 is an N6-acetyllysine (lysine 609).

It belongs to the ATP-dependent AMP-binding enzyme family. Mg(2+) is required as a cofactor. In terms of processing, acetylated. Deacetylation by the SIR2-homolog deacetylase activates the enzyme.

The enzyme catalyses acetate + ATP + CoA = acetyl-CoA + AMP + diphosphate. Its function is as follows. Catalyzes the conversion of acetate into acetyl-CoA (AcCoA), an essential intermediate at the junction of anabolic and catabolic pathways. Acs undergoes a two-step reaction. In the first half reaction, Acs combines acetate with ATP to form acetyl-adenylate (AcAMP) intermediate. In the second half reaction, it can then transfer the acetyl group from AcAMP to the sulfhydryl group of CoA, forming the product AcCoA. Enables the cell to use acetate during aerobic growth to generate energy via the TCA cycle, and biosynthetic compounds via the glyoxylate shunt. Acetylates CheY, the response regulator involved in flagellar movement and chemotaxis. The protein is Acetyl-coenzyme A synthetase of Yersinia pestis.